A 308-amino-acid chain; its full sequence is HPr kinase/phosphorylase (308 aa).

Active-site residues include His-138 and Lys-159. Gly-153–Ser-160 lines the ATP pocket. Ser-160 contacts Mg(2+). Asp-177 (proton acceptor; for phosphorylation activity. Proton donor; for dephosphorylation activity) is an active-site residue. Residues Leu-201–Asp-210 form an important for the catalytic mechanism of both phosphorylation and dephosphorylation region. Mg(2+) is bound at residue Glu-202. Arg-243 is a catalytic residue. The segment at Gln-264–Arg-269 is important for the catalytic mechanism of dephosphorylation.

This sequence belongs to the HPrK/P family. In terms of assembly, homohexamer. It depends on Mg(2+) as a cofactor.

The enzyme catalyses [HPr protein]-L-serine + ATP = [HPr protein]-O-phospho-L-serine + ADP + H(+). It catalyses the reaction [HPr protein]-O-phospho-L-serine + phosphate + H(+) = [HPr protein]-L-serine + diphosphate. Catalyzes the ATP- as well as the pyrophosphate-dependent phosphorylation of a specific serine residue in HPr, a phosphocarrier protein of the phosphoenolpyruvate-dependent sugar phosphotransferase system (PTS). HprK/P also catalyzes the pyrophosphate-producing, inorganic phosphate-dependent dephosphorylation (phosphorolysis) of seryl-phosphorylated HPr (P-Ser-HPr). In Bordetella bronchiseptica (strain ATCC BAA-588 / NCTC 13252 / RB50) (Alcaligenes bronchisepticus), this protein is HPr kinase/phosphorylase.